We begin with the raw amino-acid sequence, 556 residues long: RING finger protein 207 (556 aa).

The RING-type zinc finger occupies 25 to 64 (CPLCHAQYERPCLLDCFHEFCAGCLRGRAADGRLACPLCQ). The segment at 93-145 (TEVVRCANCDLECGKQDAETTYFCNTCGQPLCARCRDETHRARMFARHDIVAL) adopts a B box-type; atypical zinc-finger fold. 4 residues coordinate Zn(2+): cysteine 98, cysteine 101, cysteine 127, and histidine 132. Coiled coils occupy residues 218 to 273 (TREA…NKAE) and 385 to 425 (FTEH…SLIK). Residues 517–556 (FQVPVDEPSDHPQNTHDDGVNAEAPARVSTLKPAMEKEVS) are disordered. Residues 524 to 535 (PSDHPQNTHDDG) are compositionally biased toward basic and acidic residues.

Interacts with the core-glycosylated, but not the fully glycosylated form of KCNH2/HERG. Interacts with DNAJA1 and HSPA8. Interacts (via the C-terminus) with HSPA1A; this interaction additively increases KCNH2 expression.

The protein localises to the cytoplasm. Functionally, plays a role in cardiac repolarization possibly by stabilizing membrane expression of the potassium channel KCNH2/HERG, or by assisting its synthesis, folding or export from the endoplasmic reticulum, in a heat shock protein-dependent manner. In Bos taurus (Bovine), this protein is RING finger protein 207 (RNF207).